We begin with the raw amino-acid sequence, 120 residues long: Myohemerythrin (120 aa).

7 residues coordinate Fe cation: His-26, His-56, Glu-60, His-75, His-79, His-108, and Asp-113.

The protein belongs to the hemerythrin family.

In terms of biological role, myohemerythrin is an oxygen-binding protein found in the retractor muscles of certain worms. The oxygen-binding site contains two iron atoms. The protein is Myohemerythrin of Sipunculus nudus (Sipunculan worm).